The sequence spans 158 residues: Globin CTT-I/CTT-IA (158 aa).

An N-terminal signal peptide occupies residues 1 to 15; that stretch reads MKFLILALCVAAAMA. The Globin domain occupies 16–158; that stretch reads GPSGDQIAAA…FVFSTLKNEL (143 aa). Residues histidine 74 and histidine 109 each coordinate heme b.

The protein belongs to the globin family. As to quaternary structure, monomer.

In Chironomus thummi thummi (Midge), this protein is Globin CTT-I/CTT-IA (CTT-1).